The sequence spans 255 residues: 5'-nucleotidase SurE (255 aa).

Residues Asp-16, Asp-17, Ser-47, and Asn-100 each contribute to the a divalent metal cation site.

The protein belongs to the SurE nucleotidase family. The cofactor is a divalent metal cation.

Its subcellular location is the cytoplasm. It carries out the reaction a ribonucleoside 5'-phosphate + H2O = a ribonucleoside + phosphate. Functionally, nucleotidase that shows phosphatase activity on nucleoside 5'-monophosphates. This chain is 5'-nucleotidase SurE, found in Vibrio vulnificus (strain CMCP6).